Reading from the N-terminus, the 277-residue chain is Undecaprenyl-diphosphatase (277 aa).

6 consecutive transmembrane segments (helical) span residues 47 to 67 (FNIIIQLAAILAVVWEFRGKI), 85 to 105 (VNLLIAFFPAVILGVLFADLI), 108 to 128 (WLFNPITVALALVVGGVIMLW), 183 to 203 (AATEFSFFLAMPTMVGAAVYS), 218 to 238 (VFAVGFVTSFVFAMVAVRALL), and 249 to 269 (FAWYRIAFGLLILATWQFHLI).

It belongs to the UppP family.

It is found in the cell inner membrane. It carries out the reaction di-trans,octa-cis-undecaprenyl diphosphate + H2O = di-trans,octa-cis-undecaprenyl phosphate + phosphate + H(+). Functionally, catalyzes the dephosphorylation of undecaprenyl diphosphate (UPP). Confers resistance to bacitracin. In Pseudomonas paraeruginosa (strain DSM 24068 / PA7) (Pseudomonas aeruginosa (strain PA7)), this protein is Undecaprenyl-diphosphatase.